A 354-amino-acid chain; its full sequence is Guanine nucleotide-binding protein G(o) subunit alpha (354 aa).

A lipid anchor (N-myristoyl glycine) is attached at glycine 2. Cysteine 3 carries S-palmitoyl cysteine lipidation. The 323-residue stretch at 32–354 (KDVKLLLLGA…AYNLRGCGLY (323 aa)) folds into the G-alpha domain. Residues 35–48 (KLLLLGAGESGKST) form a G1 motif region. 9 residues coordinate GTP: glutamate 43, lysine 46, serine 47, threonine 48, serine 152, leucine 176, arginine 177, threonine 178, and arginine 179. Serine 47 serves as a coordination point for Mg(2+). The interval 174–182 (DILRTRVKT) is G2 motif. Threonine 182 is a Mg(2+) binding site. The tract at residues 197–206 (FRLFDVGGQR) is G3 motif. Residues 266-273 (ILFLNKKD) form a G4 motif region. The GTP site is built by asparagine 270, aspartate 273, and cysteine 325. Residues 324–329 (TCATDT) form a G5 motif region.

Belongs to the G-alpha family. G(i/o/t/z) subfamily. G proteins are composed of 3 units; alpha, beta and gamma.

The enzyme catalyses GTP + H2O = GDP + phosphate + H(+). Guanine nucleotide-binding proteins (G proteins) function as transducers downstream of G protein-coupled receptors (GPCRs) in numerous signaling cascades. The alpha chain contains the guanine nucleotide binding site and alternates between an active, GTP-bound state and an inactive, GDP-bound state. Signaling by an activated GPCR promotes GDP release and GTP binding. The alpha subunit has a low GTPase activity that converts bound GTP to GDP, thereby terminating the signal. Both GDP release and GTP hydrolysis are modulated by numerous regulatory proteins. Signaling is mediated via effector proteins, such as adenylate cyclase. Inhibits adenylate cyclase activity, leading to decreased intracellular cAMP levels. The polypeptide is Guanine nucleotide-binding protein G(o) subunit alpha (gna0) (Xenopus laevis (African clawed frog)).